The primary structure comprises 132 residues: Fatty acid-binding protein, brain (132 aa).

Val-2 is subject to N-acetylvaline. Arg-127–Tyr-129 contributes to the a fatty acid binding site.

It belongs to the calycin superfamily. Fatty-acid binding protein (FABP) family. As to quaternary structure, monomer.

The protein localises to the cytoplasm. Its function is as follows. FABPs are thought to play a role in the intracellular transport of long-chain fatty acids and their acyl-CoA esters. Binds oleic and palmitic acids but not palmitoyl CoA. The chain is Fatty acid-binding protein, brain (FABP7) from Bos taurus (Bovine).